Consider the following 328-residue polypeptide: G2/mitotic-specific cyclin-2 (328 aa).

Belongs to the cyclin family. Cyclin AB subfamily. In terms of assembly, interacts with the CDC2 protein kinase to form a serine/threonine kinase holoenzyme complex also known as maturation promoting factor (MPF). The cyclin subunit imparts substrate specificity to the complex. As to expression, only expressed in organs with dividing cells.

In terms of biological role, essential for the control of the cell cycle at the G2/M (mitosis) transition. The polypeptide is G2/mitotic-specific cyclin-2 (Medicago sativa (Alfalfa)).